Consider the following 270-residue polypeptide: Acyl-[acyl-carrier-protein]--UDP-N-acetylglucosamine O-acyltransferase (270 aa).

This sequence belongs to the transferase hexapeptide repeat family. LpxA subfamily. As to quaternary structure, homotrimer.

Its subcellular location is the cytoplasm. It catalyses the reaction a (3R)-hydroxyacyl-[ACP] + UDP-N-acetyl-alpha-D-glucosamine = a UDP-3-O-[(3R)-3-hydroxyacyl]-N-acetyl-alpha-D-glucosamine + holo-[ACP]. It functions in the pathway glycolipid biosynthesis; lipid IV(A) biosynthesis; lipid IV(A) from (3R)-3-hydroxytetradecanoyl-[acyl-carrier-protein] and UDP-N-acetyl-alpha-D-glucosamine: step 1/6. Its function is as follows. Involved in the biosynthesis of lipid A, a phosphorylated glycolipid that anchors the lipopolysaccharide to the outer membrane of the cell. The chain is Acyl-[acyl-carrier-protein]--UDP-N-acetylglucosamine O-acyltransferase from Bartonella tribocorum (strain CIP 105476 / IBS 506).